Reading from the N-terminus, the 143-residue chain is MGTFGIVALSIICSIAFLFVAYGVLRLINSIRRRNMMTADVSSVKSSQTWNFLKNPFSNSAKFEALDADDMWDTRVEEAELNTIPSASPFIDHTSETVPFVNTEAPPPRLSSSFSRQSGENAETQSQVSASPFNDKNSPYVQE.

The chain crosses the membrane as a helical span at residues 4-24 (FGIVALSIICSIAFLFVAYGV). A disordered region spans residues 97–143 (TVPFVNTEAPPPRLSSSFSRQSGENAETQSQVSASPFNDKNSPYVQE). Residues 110 to 143 (LSSSFSRQSGENAETQSQVSASPFNDKNSPYVQE) show a composition bias toward polar residues.

It is found in the golgi apparatus membrane. This is an uncharacterized protein from Schizosaccharomyces pombe (strain 972 / ATCC 24843) (Fission yeast).